A 72-amino-acid chain; its full sequence is Translation initiation factor IF-1 (72 aa).

Residues 1 to 72 form the S1-like domain; it reads MSKEEAIEVE…TRGRITYRAK (72 aa).

It belongs to the IF-1 family. Component of the 30S ribosomal translation pre-initiation complex which assembles on the 30S ribosome in the order IF-2 and IF-3, IF-1 and N-formylmethionyl-tRNA(fMet); mRNA recruitment can occur at any time during PIC assembly.

It is found in the cytoplasm. Functionally, one of the essential components for the initiation of protein synthesis. Stabilizes the binding of IF-2 and IF-3 on the 30S subunit to which N-formylmethionyl-tRNA(fMet) subsequently binds. Helps modulate mRNA selection, yielding the 30S pre-initiation complex (PIC). Upon addition of the 50S ribosomal subunit IF-1, IF-2 and IF-3 are released leaving the mature 70S translation initiation complex. This is Translation initiation factor IF-1 from Geotalea uraniireducens (strain Rf4) (Geobacter uraniireducens).